Here is a 503-residue protein sequence, read N- to C-terminus: Maturase K (503 aa).

The protein belongs to the intron maturase 2 family. MatK subfamily.

The protein resides in the plastid. The protein localises to the chloroplast. Its function is as follows. Usually encoded in the trnK tRNA gene intron. Probably assists in splicing its own and other chloroplast group II introns. This Silene latifolia (White campion) protein is Maturase K.